A 627-amino-acid chain; its full sequence is Probable serine/threonine-protein kinase PknB (627 aa).

A Protein kinase domain is found at 12 to 275 (YRIIKEIGRG…MTDVATSTSL (264 aa)). ATP-binding positions include 18-26 (IGRGGMANV) and K42. D136 (proton acceptor) is an active-site residue. A disordered region spans residues 304 to 331 (DTKPLIDKKEDNDSQTDEKAASSEVGNK). A compositionally biased stretch (basic and acidic residues) spans 307–324 (PLIDKKEDNDSQTDEKAA). 3 PASTA domains span residues 361-428 (TPTN…YVST), 430-502 (NEDI…EVSS), and 503-574 (GKQV…TYSV). The disordered stretch occupies residues 464 to 490 (QTSVPSDSYPAGTIIKQSPKKGSSFDT). The segment at 577–627 (APSSSSTTSESTTTSETSSSTTSSTSSSTTSQPSTDNNNSSKESSTTSSSS) is disordered. A compositionally biased stretch (low complexity) spans 579–627 (SSSSTTSESTTTSETSSSTTSSTSSSTTSQPSTDNNNSSKESSTTSSSS).

The protein belongs to the protein kinase superfamily. Ser/Thr protein kinase family.

It carries out the reaction L-seryl-[protein] + ATP = O-phospho-L-seryl-[protein] + ADP + H(+). The enzyme catalyses L-threonyl-[protein] + ATP = O-phospho-L-threonyl-[protein] + ADP + H(+). The polypeptide is Probable serine/threonine-protein kinase PknB (pknB) (Lactococcus lactis subsp. lactis (strain IL1403) (Streptococcus lactis)).